The chain runs to 813 residues: Palmitoyltransferase AKR1 (813 aa).

The interval 1–83 is disordered; sequence MAKKKSKSKS…PVTTSNETDP (83 aa). Residues 1-387 are Cytoplasmic-facing; it reads MAKKKSKSKS…KPWVSAKLGK (387 aa). Residues 9–24 are compositionally biased toward low complexity; that stretch reads KSSSPKPKVSSTAAKP. Polar residues predominate over residues 28-46; that stretch reads DNQQNIENVQDSPSALQQQ. Over residues 47 to 78 the composition is skewed to low complexity; the sequence is SATAEESENTATTATPSEGTTATTESSPVTTS. ANK repeat units follow at residues 133-162, 167-196, 201-231, 235-264, 276-305, and 309-338; these read PTLA…VLVN, DEIT…NPNQ, LKAS…DPNL, QTYN…STDS, SNRT…DVSK, and SLFI…DIYF. Residues 388–408 form a helical membrane-spanning segment; that stretch reads IITFLTPYFLLPLSFNVLSMG. Residues 409–412 lie on the Lumenal side of the membrane; the sequence is GDQG. The helical transmembrane segment at 413 to 433 threads the bilayer; that stretch reads GFIIPKLILAIGILGGGIYLL. Residues 434–452 lie on the Cytoplasmic side of the membrane; that stretch reads NKLIISQYIFDDKKLAKSP. Residues 453–473 traverse the membrane as a helical segment; sequence ILAGVFSATAFWSVLVWLYNI. At 474 to 485 the chain is on the lumenal side; sequence LPTTFIHNFFAN. A helical transmembrane segment spans residues 486 to 506; the sequence is VIMAILIAIFTWSFFKAMFIN. Topologically, residues 507–579 are cytoplasmic; sequence PGFVPTPADN…YNDIGVRNHK (73 aa). The DHHC domain maps to 536–586; that stretch reads HFCVNSFVRKPLRSRYSKHNKRLIARFDHSCPWVYNDIGVRNHKIFITFVY. Cysteine 566 (S-palmitoyl cysteine intermediate) is an active-site residue. The helical transmembrane segment at 580–600 threads the bilayer; sequence IFITFVYSLNMAIFVFLYLSL. The Lumenal segment spans residues 601–642; the sequence is QYFDKVKDQYDSDDEGEGEGFVCSILGDDMCYGYKNHHFHFN. Residues 643 to 663 form a helical membrane-spanning segment; sequence VFMWDLFQCVWVSFLCIVQTF. At 664 to 813 the chain is on the cytoplasmic side; the sequence is QILKGLTTWE…VDYYTLYSYH (150 aa).

It belongs to the DHHC palmitoyltransferase family. AKR/ZDHHC17 subfamily.

The protein resides in the early endosome membrane. Its subcellular location is the golgi apparatus membrane. The enzyme catalyses L-cysteinyl-[protein] + hexadecanoyl-CoA = S-hexadecanoyl-L-cysteinyl-[protein] + CoA. Its function is as follows. Palmitoyltransferase specific for casein kinase 1. The chain is Palmitoyltransferase AKR1 (AKR1) from Candida albicans (strain SC5314 / ATCC MYA-2876) (Yeast).